We begin with the raw amino-acid sequence, 310 residues long: Protoheme IX farnesyltransferase (310 aa).

Helical transmembrane passes span 30-47 (VTTL…FGAA), 50-70 (GLPL…LVSG), 102-122 (LGHG…YLGL), 126-146 (WLTA…YTPL), 152-172 (ICTT…WTAI), 181-201 (VALF…IAWL), 228-248 (IVIY…LRFA), 251-271 (IYFL…LRMF), and 286-306 (ARQL…VMML).

It belongs to the UbiA prenyltransferase family. Protoheme IX farnesyltransferase subfamily.

It is found in the cell inner membrane. It catalyses the reaction heme b + (2E,6E)-farnesyl diphosphate + H2O = Fe(II)-heme o + diphosphate. The protein operates within porphyrin-containing compound metabolism; heme O biosynthesis; heme O from protoheme: step 1/1. In terms of biological role, converts heme B (protoheme IX) to heme O by substitution of the vinyl group on carbon 2 of heme B porphyrin ring with a hydroxyethyl farnesyl side group. The chain is Protoheme IX farnesyltransferase from Koribacter versatilis (strain Ellin345).